The sequence spans 248 residues: E3 ubiquitin-protein ligase BIG BROTHER (248 aa).

The segment at 197–238 (CVICQLKYKIGERQMNLPCKHVYHSECISKWLSINKVCPVCN) adopts an RING-type; atypical zinc-finger fold.

As to quaternary structure, interacts with the E2 ubiquitin conjugating enzyme UBC10 via the RING domain. Interacts with DA1. In terms of processing, auto-ubiquitinated. In terms of tissue distribution, mostly expressed in inflorescence, and, to a lower extent, in seedlings, roots, stems, leaves and siliques.

The enzyme catalyses S-ubiquitinyl-[E2 ubiquitin-conjugating enzyme]-L-cysteine + [acceptor protein]-L-lysine = [E2 ubiquitin-conjugating enzyme]-L-cysteine + N(6)-ubiquitinyl-[acceptor protein]-L-lysine.. It participates in protein modification; protein ubiquitination. Its function is as follows. E3 ubiquitin-protein ligase that limits organ size, and possibly seed size, in a dose-dependent manner. Negatively regulates the duration of cell proliferation in leaves and petals independently of the major phytohormones (e.g. auxin, cytokinin, gibberellin, brassinosteroids, ethylene, abscisic acid, jasmonic acid), probably by targeting growth stimulators for degradation. Limits the proliferation of root meristematic cells. Polyubiquitinates DA1. Involved in the promotion of leaf senescence, in addition to its function in restricting plant growth. Possesses E3 ubiquitin-protein ligase activity in vitro. The sequence is that of E3 ubiquitin-protein ligase BIG BROTHER (BB) from Arabidopsis thaliana (Mouse-ear cress).